An 876-amino-acid polypeptide reads, in one-letter code: MSKKTNINTNTKINNFFQTKTNNANVVNEKGYIEDDNEIIDINDFEEDQNLYKIQNKSNGNNSINNNNNNKNTPTKPNLNLTPTKSHTISFPTRPKLPSFTQPNNNNNNNNNNNNNNNINNNNNNNNNNNNNNNNNNNNNNNNSSTNVKPTTTTTTTTTINNNNNNNNNNNINNNNIDLKNKYSFLTNFKKKSFAPLSEQMRPTELSDFIGQESLLVGDPIVKKLFQSPELPSFILYGPPGCGKTTLAQIVASKSNYNINALSAVGSGVKDIKEVIDKARNTLQFGKKTILFIDEIHRYNKLQQDVLLPAIESGIIILIGATTENPSFELNGALLSRCKVFKMEKLTKENLETLIKRTLEVTPLLMDRRLIMDEDAIKSLAEIADGDARVAINVLDMAIKANKEEQTYKERMEEKHSTSGIVRDIVLTKKQMGSLLQRTSLIYDKGGDAFYELISALHKSVRGSDANATAYWVIRMLESGCEPLYIVRRMVRMASEDIGLADNSALPLAIAAYQAVHFVGMPECTNAILQCAVYLANAAKSNSCDHWYAHTREYLEKHEGPPVPIHLRNAPTKMMKDWGYGADYQYNHAFDDQSQVTQIYLPEPIKNEKFFEYKLTCPSVKDRQQSQDQTQRSSQQQQQQQTQPQQQTQPQQQTQQQIQQQLEQLKQIQQQLEQQVQQQIQQQSSQSPSQQSQLQELQQIQQQLQQIQQTNSQINNKNNDSNIIKKNVNNSLDLNPTLPKKQKMIIPSILDNSNNNNNNNNINKSPTPIKKANISHNQLDSSINTSAITIDDSSECDINFDDDFDMASVSSTTMISNIPVGANVAGATEAETETKAISSTDTKESVSINDSDKDLTTTHKNEQDQNNPPDPISLDF.

Composition is skewed to low complexity over residues 56–85 (NKSNGNNSINNNNNNKNTPTKPNLNLTPTK) and 104–175 (NNNN…INNN). The segment at 56–175 (NKSNGNNSIN…NNNNNNINNN (120 aa)) is disordered. Residue 240 to 246 (PGCGKTT) participates in ATP binding. Disordered stretches follow at residues 621 to 647 (KDRQQSQDQTQRSSQQQQQQQTQPQQQ), 714 to 737 (INNKNNDSNIIKKNVNNSLDLNPT), and 833 to 876 (ETKA…SLDF). 2 stretches are compositionally biased toward low complexity: residues 626–647 (SQDQTQRSSQQQQQQQTQPQQQ) and 714–731 (INNKNNDSNIIKKNVNNS). Positions 835-849 (KAISSTDTKESVSIN) are enriched in polar residues. The span at 850–863 (DSDKDLTTTHKNEQ) shows a compositional bias: basic and acidic residues.

The protein belongs to the AAA ATPase family. RarA/MGS1/WRNIP1 subfamily.

It localises to the nucleus. It carries out the reaction ATP + H2O = ADP + phosphate + H(+). Its function is as follows. Functions as a modulator for initiation or reinitiation events during DNA polymerase delta-mediated DNA synthesis. Has an intrinsic ATPase activity that functions as a sensor of DNA damage or of arrested replication forks and regulates the extent of DNA synthesis. The chain is ATPase WRNIP1 from Dictyostelium discoideum (Social amoeba).